Consider the following 961-residue polypeptide: Outer capsid protein VP2 (961 aa).

The protein belongs to the orbivirus VP2 family.

Its subcellular location is the virion. Its function is as follows. The VP2 protein is one of the two proteins (with VP5) which constitute the virus particle outer capsid. It is the major target of the host immunogenic response. Responsible for viral attachment to target host cell, probably by binding to sialic acid. This attachment induces virion internalization predominantly through clathrin-dependent endocytosis. In Antilocapra americana (Pronghorn), this protein is Outer capsid protein VP2 (Segment-2).